Here is a 289-residue protein sequence, read N- to C-terminus: Poly-beta-1,6-N-acetyl-D-glucosamine N-deacetylase (289 aa).

The first 30 residues, 1–30, serve as a signal peptide directing secretion; sequence MKPFKLIFISALMILIMTNATPISHLNAQA. Positions 113–289 constitute a NodB homology domain; the sequence is RSVWINFDDM…KEWDGFDEEK (177 aa).

The protein belongs to the polysaccharide deacetylase family.

The protein localises to the secreted. The protein resides in the cell wall. Its function is as follows. Catalyzes the N-deacetylation of poly-beta-1,6-N-acetyl-D-glucosamine (PNAG, also referred to as PIA), a biofilm adhesin polysaccharide. In fact, the IcaB deacetylase converts 15 to 20% of the GlcNAc residues of PNAG to glucosamine. N-deacetylation is crucial for attachment of the polysaccharide to the bacterial cell surface; it leads to the introduction of positive charges in the otherwise neutral PIA polymer, allowing electrostatic interactions. Deacetylation of the polymer is also essential for key virulence mechanisms of S.epidermidis, namely biofilm formation, colonization, and resistance to neutrophil phagocytosis and human antibacterial peptides. This is Poly-beta-1,6-N-acetyl-D-glucosamine N-deacetylase (icaB) from Staphylococcus epidermidis (strain ATCC 35984 / DSM 28319 / BCRC 17069 / CCUG 31568 / BM 3577 / RP62A).